Consider the following 277-residue polypeptide: MKQYLELLNDVVTNGLTKGDRTGTGTKAVFARQYRHNLADGFPLLTTKKLHFKSIANELIWMLSGNTNIKWLNENGVKIWDEWATEDGDLGPVYGEQWTAWPTKDGGTINQIDYMVHTLKTNPNSRRILFHGWNVEYLPDETKSPQENARNGKQALPPCHLLYQAFVHDGHLSMQLYIRSSDVFLGLPYNTAALALLTHMLAQQCDLIPHEIIVTTGDTHAYSNHMEQIRTQLARTPKKLPELVIKRKPASIYDYKFEDFEIVGYDADPSIKADVAI.

Residue Arg-21 participates in dUMP binding. His-51 is a (6R)-5,10-methylene-5,6,7,8-tetrahydrofolate binding site. 126-127 contributes to the dUMP binding site; that stretch reads RR. Cys-159 functions as the Nucleophile in the catalytic mechanism. Residues 179-182, Asn-190, and 220-222 each bind dUMP; these read RSSD and HAY. Residue Asp-182 participates in (6R)-5,10-methylene-5,6,7,8-tetrahydrofolate binding. Ala-276 serves as a coordination point for (6R)-5,10-methylene-5,6,7,8-tetrahydrofolate.

It belongs to the thymidylate synthase family. Bacterial-type ThyA subfamily. Homodimer.

The protein localises to the cytoplasm. It carries out the reaction dUMP + (6R)-5,10-methylene-5,6,7,8-tetrahydrofolate = 7,8-dihydrofolate + dTMP. It participates in pyrimidine metabolism; dTTP biosynthesis. In terms of biological role, catalyzes the reductive methylation of 2'-deoxyuridine-5'-monophosphate (dUMP) to 2'-deoxythymidine-5'-monophosphate (dTMP) while utilizing 5,10-methylenetetrahydrofolate (mTHF) as the methyl donor and reductant in the reaction, yielding dihydrofolate (DHF) as a by-product. This enzymatic reaction provides an intracellular de novo source of dTMP, an essential precursor for DNA biosynthesis. This is Thymidylate synthase from Pseudomonas fluorescens (strain SBW25).